We begin with the raw amino-acid sequence, 47 residues long: Ruminococcin-A (47 aa).

Positions 1-23 are cleaved as a signal peptide; the sequence is MRNDVLTLTNPMEEKELEQILGG. Threonine 30 and threonine 39 each carry 2,3-didehydrobutyrine. The beta-methyllanthionine (Thr-Cys) cross-link spans 30–35; that stretch reads TISHEC. Positions 32 to 46 form a cross-link, lanthionine (Ser-Cys); that stretch reads SHECNMNTWQFLFTC. Residues 45-47 constitute a cross-link (beta-methyllanthionine (Thr-Cys)); that stretch reads TCC.

In terms of processing, maturation of lantibiotics involves the enzymatic conversion of Thr, and Ser into dehydrated AA and the formation of thioether bonds with cysteine. This is followed by membrane translocation and cleavage of the modified precursor. It is not established whether the 2,3-didehydrobutyrine is the E- or Z-isomer.

It localises to the secreted. Lanthionine-containing peptide antibiotic (lantibiotic) active on Gram-positive bacteria. The bactericidal activity of lantibiotics is based on depolarization of energized bacterial cytoplasmic membranes, initiated by the formation of aqueous transmembrane pores. Ruminococcin A is a broad spectrum bacteriocin exhibiting activity against a wide range of pathogenic clostridia and B.longum. This chain is Ruminococcin-A (rumA1), found in Mediterraneibacter gnavus (Ruminococcus gnavus).